The primary structure comprises 177 residues: MNARENAIVQKYALSFVEKVSDHADIWDMYDQISDLISIIHDSKLNRILLSATVSREEKADFVRTVRQSSFWQINDLIEDVIRDGHADLLLETLERVQLQISKFKNEFEARVVSVYPLTEAQKERLRHLVEQRFSLRVRNITEELDQSLLGGFIVTVNHKVIDASVRTQLKDIRKKL.

Belongs to the ATPase delta chain family. In terms of assembly, F-type ATPases have 2 components, F(1) - the catalytic core - and F(0) - the membrane proton channel. F(1) has five subunits: alpha(3), beta(3), gamma(1), delta(1), epsilon(1). F(0) has three main subunits: a(1), b(2) and c(10-14). The alpha and beta chains form an alternating ring which encloses part of the gamma chain. F(1) is attached to F(0) by a central stalk formed by the gamma and epsilon chains, while a peripheral stalk is formed by the delta and b chains.

It localises to the cell membrane. Functionally, f(1)F(0) ATP synthase produces ATP from ADP in the presence of a proton or sodium gradient. F-type ATPases consist of two structural domains, F(1) containing the extramembraneous catalytic core and F(0) containing the membrane proton channel, linked together by a central stalk and a peripheral stalk. During catalysis, ATP synthesis in the catalytic domain of F(1) is coupled via a rotary mechanism of the central stalk subunits to proton translocation. Its function is as follows. This protein is part of the stalk that links CF(0) to CF(1). It either transmits conformational changes from CF(0) to CF(1) or is implicated in proton conduction. This chain is ATP synthase subunit delta, found in Streptococcus suis (strain 98HAH33).